A 938-amino-acid polypeptide reads, in one-letter code: Isoleucine--tRNA ligase (938 aa).

A 'HIGH' region motif is present at residues 58 to 68 (PYANGSIHIGH). Position 183 is an N6-acetyllysine (Lys183). Residue Glu561 coordinates L-isoleucyl-5'-AMP. The short motif at 602–606 (KMSKS) is the 'KMSKS' region element. Lys605 contacts ATP. Cys901, Cys904, Cys921, and Cys924 together coordinate Zn(2+).

The protein belongs to the class-I aminoacyl-tRNA synthetase family. IleS type 1 subfamily. Monomer. The cofactor is Zn(2+).

The protein localises to the cytoplasm. It carries out the reaction tRNA(Ile) + L-isoleucine + ATP = L-isoleucyl-tRNA(Ile) + AMP + diphosphate. Functionally, catalyzes the attachment of isoleucine to tRNA(Ile). As IleRS can inadvertently accommodate and process structurally similar amino acids such as valine, to avoid such errors it has two additional distinct tRNA(Ile)-dependent editing activities. One activity is designated as 'pretransfer' editing and involves the hydrolysis of activated Val-AMP. The other activity is designated 'posttransfer' editing and involves deacylation of mischarged Val-tRNA(Ile). This chain is Isoleucine--tRNA ligase, found in Escherichia coli O6:H1 (strain CFT073 / ATCC 700928 / UPEC).